We begin with the raw amino-acid sequence, 1381 residues long: Regulator of G-protein signaling 12 (1381 aa).

In terms of domain architecture, PDZ spans Ser21 to Thr98. Residues Ser171 and Ser194 each carry the phosphoserine modification. A Glycyl lysine isopeptide (Lys-Gly) (interchain with G-Cter in SUMO2) cross-link involves residue Lys195. A PID domain is found at Ser223–Arg390. Disordered stretches follow at residues Ala409–Phe428, Leu442–Gly528, and Arg620–Thr644. A compositionally biased stretch (polar residues) spans His412–Phe428. Residues Arg524 and Arg633 each carry the omega-N-methylarginine modification. Ser661 and Ser671 each carry phosphoserine. The RGS domain occupies Ser715–Val832. Residues Pro842 to Gly942 form a disordered region. A compositionally biased stretch (low complexity) spans Ser849 to Lys869. Ser850 and Ser879 each carry phosphoserine. Positions Asp914–Pro923 are enriched in basic and acidic residues. At Ser943 the chain carries Phosphoserine. RBD domains follow at residues Lys962 to Arg1032 and Leu1034 to Arg1104. Positions Glu1102–Lys1117 are enriched in basic and acidic residues. The segment at Glu1102–Glu1169 is disordered. The segment covering Lys1122 to Arg1132 has biased composition (polar residues). A compositionally biased stretch (basic and acidic residues) spans Ile1151–Glu1169. Positions Ala1187 to Leu1209 constitute a GoLoco domain. 2 disordered regions span residues Ser1227 to Thr1318 and Leu1347 to Phe1381. Positions Ser1261–Pro1280 are enriched in low complexity. Pro residues predominate over residues Leu1361–Phe1381.

Interacts with GNAI1, GNAI2 and GNAI3; the interactions are GDP-dependent. As to expression, expressed in brain.

The protein localises to the nucleus. It localises to the cytoplasm. Its subcellular location is the cell projection. The protein resides in the dendrite. It is found in the synapse. Its function is as follows. Regulates G protein-coupled receptor signaling cascades. Inhibits signal transduction by increasing the GTPase activity of G protein alpha subunits, thereby driving them into their inactive GDP-bound form. This Mus musculus (Mouse) protein is Regulator of G-protein signaling 12 (Rgs12).